A 430-amino-acid polypeptide reads, in one-letter code: Sphingosine-1-phosphate phosphatase 1 (430 aa).

The disordered stretch occupies residues 34–103; it reads SSPAADEDAE…AGSQRRNSLT (70 aa). Position 101 is a phosphoserine (Ser-101). Position 103 is a phosphothreonine (Thr-103). A run of 4 helical transmembrane segments spans residues 121-141, 152-172, 193-213, and 216-236; these read FCLG…PFWI, LVII…IIRW, MPST…LLTY, and WQYP…LVCL. Positions 167–175 are phosphatase sequence motif I; it reads KDIIRWPRP. Residues 194–197 are phosphatase sequence motif II; that stretch reads PSTH. His-197 serves as the catalytic Proton donor. The tract at residues 237–248 is phosphatase sequence motif III; it reads SRIYMGMHSILD. Residue His-244 is the Nucleophile of the active site. Helical transmembrane passes span 246 to 266, 279 to 299, 311 to 331, 348 to 368, and 409 to 429; these read ILDV…FYPL, YAPL…FTLD, ILGS…LGLS, VTLF…VLFV, and YGMV…FIGI.

This sequence belongs to the type 2 lipid phosphate phosphatase family. Highly expressed in liver and kidney. Expressed in epidermis, in the stratum granulosum and the stratum spinosum.

It localises to the endoplasmic reticulum membrane. It is found in the cell membrane. The catalysed reaction is sphinganine 1-phosphate + H2O = sphinganine + phosphate. The enzyme catalyses sphing-4-enine 1-phosphate + H2O = sphing-4-enine + phosphate. Its activity is regulated as follows. Inhibited by NaF, sodium orthovanadate, propanolol, and N-ethylmaleimide. Its function is as follows. Specifically dephosphorylates sphingosine 1-phosphate (S1P), dihydro-S1P, and phyto-S1P. Does not act on ceramide 1-phosphate, lysophosphatidic acid or phosphatidic acid. Sphingosine-1-phosphate phosphatase activity is needed for efficient recycling of sphingosine into the sphingolipid synthesis pathway. Regulates the intracellular levels of the bioactive sphingolipid metabolite S1P that regulates diverse biological processes acting both as an extracellular receptor ligand or as an intracellular second messenger. Involved in efficient ceramide synthesis from exogenous sphingoid bases. Converts S1P to sphingosine, which is readily metabolized to ceramide via ceramide synthase. In concert with sphingosine kinase 2 (SphK2), recycles sphingosine into ceramide through a phosphorylation/dephosphorylation cycle. Regulates endoplasmic-to-Golgi trafficking of ceramides, resulting in the regulation of ceramide levels in the endoplasmic reticulum, preferentially long-chain ceramide species, and influences the anterograde membrane transport of both ceramide and proteins from the endoplasmic reticulum to the Golgi apparatus. The modulation of intracellular ceramide levels in turn regulates apoptosis. Via S1P levels, modulates resting tone, intracellular Ca(2+) and myogenic vasoconstriction in resistance arteries. Also involved in unfolded protein response (UPR) and ER stress-induced autophagy via regulation of intracellular S1P levels. Involved in the regulation of epidermal homeostasis and keratinocyte differentiation. This Mus musculus (Mouse) protein is Sphingosine-1-phosphate phosphatase 1.